The sequence spans 93 residues: NADH-dependent phenylglyoxylate dehydrogenase subunit delta (93 aa).

2 4Fe-4S ferredoxin-type domains span residues 39 to 68 (MRPV…EHAA) and 66 to 93 (HAAW…RRSR).

As to quaternary structure, dimer of heteropentamers composed of an alpha (PadG), a beta (PadI), a gamma (PadE), a delta (PadF) and an epsilon (PadH) subunit. It depends on [4Fe-4S] cluster as a cofactor.

The enzyme catalyses phenylglyoxylate + NAD(+) + CoA = benzoyl-CoA + CO2 + NADH. Its activity is regulated as follows. Activated by magnesium ions and thiamine diphosphate. Its function is as follows. Involved in the anaerobic metabolism of phenylalanine and phenylacetate. Catalyzes the oxidative decarboxylation of phenylglyoxylate to benzoyl-CoA and CO(2). It can also react slowly with 2-oxo-3-methylbutanoate and use different electron acceptors such as benzyl viologen, methyl viologen, FAD or FMN, but NAD seems to be the physiological electron acceptor. Also catalyzes an isotope exchange between CO(2) and the carboxyl group which proves partial or complete reversibility of the oxidative decarboxylation reaction. This is NADH-dependent phenylglyoxylate dehydrogenase subunit delta (padF) from Aromatoleum evansii (Azoarcus evansii).